Here is a 387-residue protein sequence, read N- to C-terminus: 3-ketoacyl-CoA thiolase (387 aa).

Residue C91 is the Acyl-thioester intermediate of the active site. Residues H343 and C373 each act as proton acceptor in the active site.

It belongs to the thiolase-like superfamily. Thiolase family. Heterotetramer of two alpha chains (FadB) and two beta chains (FadA).

The protein resides in the cytoplasm. The enzyme catalyses an acyl-CoA + acetyl-CoA = a 3-oxoacyl-CoA + CoA. Its pathway is lipid metabolism; fatty acid beta-oxidation. In terms of biological role, catalyzes the final step of fatty acid oxidation in which acetyl-CoA is released and the CoA ester of a fatty acid two carbons shorter is formed. This is 3-ketoacyl-CoA thiolase from Idiomarina loihiensis (strain ATCC BAA-735 / DSM 15497 / L2-TR).